Reading from the N-terminus, the 480-residue chain is Cytochrome P450 724B1 (480 aa).

Residues 6–26 traverse the membrane as a helical segment; it reads LVLAALVILLALLLTLVLSHF. Cys-426 lines the heme pocket.

The protein belongs to the cytochrome P450 family. Heme serves as cofactor. Ubiquitously expressed at low levels, but preferentially in the internodes and the florets before flowering.

The protein resides in the membrane. It carries out the reaction campesterol + reduced [NADPH--hemoprotein reductase] + O2 = (22S)-22-hydroxycampesterol + oxidized [NADPH--hemoprotein reductase] + H2O + H(+). The protein operates within plant hormone biosynthesis; brassinosteroid biosynthesis. Functionally, involved in brassinosteroid biosynthesis. May catalyze a C6-oxidation step and may be involved to supply 6-deoxotyphasterol and typhasterol. Involved in internode elongation and seed development. Catalyzes the conversion of campesterol (CR) to (22S)-22-hydroxycampesterol (22-OHCR, 22-hydroxyCR). This Oryza sativa subsp. japonica (Rice) protein is Cytochrome P450 724B1.